We begin with the raw amino-acid sequence, 158 residues long: NADPH-dependent 7-cyano-7-deazaguanine reductase (158 aa).

The active-site Thioimide intermediate is cysteine 56. The active-site Proton donor is aspartate 63. Substrate contacts are provided by residues 78 to 80 and 97 to 98; these read LES and HE.

This sequence belongs to the GTP cyclohydrolase I family. QueF type 1 subfamily.

It localises to the cytoplasm. The catalysed reaction is 7-aminomethyl-7-carbaguanine + 2 NADP(+) = 7-cyano-7-deazaguanine + 2 NADPH + 3 H(+). Its pathway is tRNA modification; tRNA-queuosine biosynthesis. Catalyzes the NADPH-dependent reduction of 7-cyano-7-deazaguanine (preQ0) to 7-aminomethyl-7-deazaguanine (preQ1). This chain is NADPH-dependent 7-cyano-7-deazaguanine reductase, found in Nitrobacter winogradskyi (strain ATCC 25391 / DSM 10237 / CIP 104748 / NCIMB 11846 / Nb-255).